The primary structure comprises 159 residues: Neuroglobin (159 aa).

The 149-residue stretch at 3–151 folds into the Globin domain; that stretch reads KLSSKDKELI…VVASMSRGWA (149 aa). The heme b site is built by histidine 66 and histidine 98.

The protein belongs to the globin family. As to quaternary structure, monomer. Homodimers and homotetramers. Mainly monomeric but also detected as part of homodimers and homotetramers.

The protein localises to the cytoplasm. Its subcellular location is the cytosol. It is found in the mitochondrion matrix. It carries out the reaction Fe(III)-heme b-[protein] + nitric oxide + H2O = Fe(II)-heme b-[protein] + nitrite + 2 H(+). Monomeric globin with a bis-histidyl six-coordinate heme-iron atom through which it can bind dioxygen, carbon monoxide and nitric oxide. Could help transport oxygen and increase its availability to the metabolically active neuronal tissues, though its low quantity in tissues as well as its high affinity for dioxygen, which may limit its oxygen-releasing ability, argue against it. The ferrous/deoxygenated form exhibits a nitrite reductase activity and it could produce nitric oxide which in turn inhibits cellular respiration in response to hypoxia. In its ferrous/deoxygenated state, it may also exhibit GDI (Guanine nucleotide Dissociation Inhibitor) activity toward heterotrimeric G-alpha proteins, thereby regulating signal transduction to facilitate neuroprotective responses in the wake of hypoxia and associated oxidative stress. The chain is Neuroglobin (ngb) from Tetraodon nigroviridis (Spotted green pufferfish).